The chain runs to 117 residues: MGWSCIILFLVATATGVHSHVQLQQPGAELVKPGASVKVSCKASGYTFTSYWMHWVKQRPGQGLEWIGRIHPSDSDTNYNQKFKGKATLTVDKSSSTAYMQLSSLTSEDSAVYYCAI.

Residues 1 to 19 (MGWSCIILFLVATATGVHS) form the signal peptide. The segment at 20-49 (HVQLQQPGAELVKPGASVKVSCKASGYTFT) is framework-1. A disulfide bond links cysteine 41 and cysteine 115. A complementarity-determining-1 region spans residues 50–54 (SYWMH). The tract at residues 55 to 68 (WVKQRPGQGLEWIG) is framework-2. The segment at 69–85 (RIHPSDSDTNYNQKFKG) is complementarity-determining-2. The tract at residues 86–117 (KATLTVDKSSSTAYMQLSSLTSEDSAVYYCAI) is framework-3.

This Mus musculus (Mouse) protein is Ig heavy chain V region 102.